A 146-amino-acid chain; its full sequence is Hemoglobin subunit beta (146 aa).

The residue at position 1 (Val-1) is an N-acetylvaline. The region spanning 2–146 (HLTPEEKNAV…VANALAHKYH (145 aa)) is the Globin domain. Thr-12 is modified (phosphothreonine). Ser-44 is subject to Phosphoserine. Lys-59 is modified (N6-acetyllysine). His-63 is a binding site for heme b. Lys-82 is modified (N6-acetyllysine). Residue His-92 participates in heme b binding. Residue Cys-93 is modified to S-nitrosocysteine. The residue at position 144 (Lys-144) is an N6-acetyllysine.

Belongs to the globin family. As to quaternary structure, heterotetramer of two alpha chains and two beta chains. Red blood cells.

In terms of biological role, involved in oxygen transport from the lung to the various peripheral tissues. This chain is Hemoglobin subunit beta (HBB), found in Macaca mulatta (Rhesus macaque).